Consider the following 365-residue polypeptide: Peptide chain release factor 2 (365 aa).

Gln-252 is modified (N5-methylglutamine).

It belongs to the prokaryotic/mitochondrial release factor family. Methylated by PrmC. Methylation increases the termination efficiency of RF2.

The protein localises to the cytoplasm. In terms of biological role, peptide chain release factor 2 directs the termination of translation in response to the peptide chain termination codons UGA and UAA. The protein is Peptide chain release factor 2 of Escherichia coli O8 (strain IAI1).